Here is a 1049-residue protein sequence, read N- to C-terminus: RTX-III toxin determinant A from serotype 2 (1049 aa).

A run of 3 helical transmembrane segments spans residues 154–170 (TIISGIQSVLGTVLAGI), 315–331 (ALIASSISLAISPLAFL), and 397–413 (LVGAPITLLVTGITGLI). Hemolysin-type calcium-binding repeat units lie at residues 743–760 (KGSKFRDIFHGADGDDLL), 761–778 (NGNDGDDILYGDKGNDEL), 779–796 (RGDNGNDQLYGGEGDDKL), 797–814 (LGGNGNNYLSGGDGNDEL), 825–842 (RGGKGDDKLYGSSGSDLL), and 843–860 (DGGEGNDYLEGGDGSDFY).

The protein belongs to the RTX prokaryotic toxin (TC 1.C.11) family. Palmitoylated by ApxIIIC. The toxin only becomes active when modified.

The protein resides in the secreted. The protein localises to the host cell membrane. Its function is as follows. Does not have hemolytic activity but shows a strong cytotoxicity towards alveolar macrophages and neutrophils. This is RTX-III toxin determinant A from serotype 2 (apxIIIA) from Actinobacillus pleuropneumoniae (Haemophilus pleuropneumoniae).